The following is a 67-amino-acid chain: Large ribosomal subunit protein uL29 (67 aa).

This sequence belongs to the universal ribosomal protein uL29 family.

The polypeptide is Large ribosomal subunit protein uL29 (Agathobacter rectalis (strain ATCC 33656 / DSM 3377 / JCM 17463 / KCTC 5835 / VPI 0990) (Eubacterium rectale)).